We begin with the raw amino-acid sequence, 464 residues long: Asparagine--tRNA ligase (464 aa).

The protein belongs to the class-II aminoacyl-tRNA synthetase family. In terms of assembly, homodimer.

It localises to the cytoplasm. It catalyses the reaction tRNA(Asn) + L-asparagine + ATP = L-asparaginyl-tRNA(Asn) + AMP + diphosphate + H(+). The chain is Asparagine--tRNA ligase from Azobacteroides pseudotrichonymphae genomovar. CFP2.